A 919-amino-acid polypeptide reads, in one-letter code: Phosphoenolpyruvate carboxylase (919 aa).

Residues histidine 138 and lysine 579 contribute to the active site.

This sequence belongs to the PEPCase type 1 family. Mg(2+) is required as a cofactor.

The catalysed reaction is oxaloacetate + phosphate = phosphoenolpyruvate + hydrogencarbonate. Forms oxaloacetate, a four-carbon dicarboxylic acid source for the tricarboxylic acid cycle. The protein is Phosphoenolpyruvate carboxylase (ppc) of Corynebacterium efficiens (strain DSM 44549 / YS-314 / AJ 12310 / JCM 11189 / NBRC 100395).